Consider the following 471-residue polypeptide: Variant surface glycoprotein WRATAT A (471 aa).

The signal sequence occupies residues Met1 to Ala18. Residues Asn61 and Asn133 are each glycosylated (N-linked (GlcNAc...) asparagine). The disordered stretch occupies residues Gln373–Phe457. Residues Thr379 to Gln392 show a composition bias toward low complexity. 2 cysteine pairs are disulfide-bonded: Cys401–Cys414 and Cys410–Cys427. Positions Cys401–Lys447 are enriched in basic and acidic residues. Over residues Ala448–Phe457 the composition is skewed to polar residues. The N-linked (GlcNAc...) asparagine glycan is linked to Asn449. The GPI-anchor amidated serine moiety is linked to residue Ser454. Residues Asn455 to Leu471 constitute a propeptide, removed in mature form.

It localises to the cell membrane. VSG forms a coat on the surface of the parasite. The trypanosome evades the immune response of the host by expressing a series of antigenically distinct VSGs from an estimated 1000 VSG genes. This is Variant surface glycoprotein WRATAT A from Trypanosoma brucei rhodesiense.